Here is a 907-residue protein sequence, read N- to C-terminus: Phototropin-2 (907 aa).

The tract at residues 28–84 (ATAGLEIVAEDAPSGSSGAHQQQAWRPVAPATAGRDSGGTGSGKSSVDGGVGRASHD) is disordered. Positions 41 to 51 (SGSSGAHQQQA) are enriched in polar residues. The 74-residue stretch at 89–162 (VSQELKDALS…AKIRDAVKHG (74 aa)) folds into the PAS 1 domain. FMN-binding positions include 138–143 (NCRFLQ), Arg-156, Asn-171, Asn-181, and Gln-202. Position 139 is an S-4a-FMN cysteine (Cys-139). One can recognise a PAC 1 domain in the interval 163–217 (RSFCGRLLNYRKDGAPFWNLLTVTPIRDDNGKVIKFIGMQVEVSKYTEGLSDKRM). Residues 332-363 (RSSVGSREAPAVVEEPAPAPPPAPEVVERTDS) form a disordered region. Positions 375-448 (QGIDLATTLE…DKIREAIREQ (74 aa)) constitute a PAS 2 domain. FMN contacts are provided by residues 424–429 (NCRFLQ), Arg-442, Asn-457, Asn-467, and Gln-488. Residue Cys-425 is modified to S-4a-FMN cysteine. The PAC 2 domain occupies 449 to 503 (KEITVQLINYTKSGKKFWNLFHLQPMRDQKGELQYFIGVQLDGSDHVEPLRNRLS). One can recognise a Protein kinase domain in the interval 576-863 (FKPVKPLGCG…ANDIKQHSFF (288 aa)). ATP contacts are provided by residues 582–590 (LGCGDTGSV) and Lys-605. The active-site Proton acceptor is the Asp-701.

The protein belongs to the protein kinase superfamily. Ser/Thr protein kinase family. Homodimer. The cofactor is FMN. Post-translationally, autophosphorylated in response to blue light irradiation. In terms of processing, 2 molecules of FMN bind covalently to cysteines after exposure to blue light and are reversed in the dark. As to expression, expressed at low levels in leaves of dark-grown seedlings.

The catalysed reaction is L-seryl-[protein] + ATP = O-phospho-L-seryl-[protein] + ADP + H(+). It carries out the reaction L-threonyl-[protein] + ATP = O-phospho-L-threonyl-[protein] + ADP + H(+). Functionally, protein kinase that acts as a blue light photoreceptor in a signal-transduction pathway for phototropic responses. Regulates a wide range of physiological activities in plants that maximize the efficiency of photosynthesis, such as chloroplast relocations, stomata opening, and leaf expansion. In Oryza sativa subsp. japonica (Rice), this protein is Phototropin-2 (PHOT2).